The primary structure comprises 351 residues: MTLPAPRDGSPAVPRLADIAAQAQVSEATASRVLNGRPASRXSTRQRVLAALDLLGYERPTRLRRRSAGLIGLVTPELTNPIFPAFAQVVEQALAGYGYTPVLCTQIPGGATEDELVEQLEERGVNGIVFLSGLHADTTADPRRYARLTERGVPFVLINGYNERIRAPFVSPDDRSAVRMAVRHLADLGHRRIGLAVGPDRYVPSRRKAEGFADALAEILGTPRDQAEQHVRRTLFSVEGGHAAAGSLLEQGCTGLVCGSDLMALGAVRAARERGLDVPADLSVVGFDDSQLVAFTDPPLTTVRQPVHAMATAAVGALLEEIAHQTVQRTEFVFQPELVVRGSTAQWVPGG.

The region spanning 14–69 is the HTH lacI-type domain; that stretch reads PRLADIAAQAQVSEATASRVLNGRPASRXSTRQRVLAALDLLGYERPTRLRRRSAG. Residues 16 to 35 constitute a DNA-binding region (H-T-H motif); the sequence is LADIAAQAQVSEATASRVLN.

Its function is as follows. Putative sugar-binding regulatory protein for the alpha-amylase gene. This is an uncharacterized protein from Streptomyces limosus (Streptomyces albidoflavus).